The following is a 117-amino-acid chain: UPF0344 protein GK0697 (117 aa).

Helical transmembrane passes span 1-21, 39-59, 60-80, and 97-117; these read MTHA…LAVS, LFYI…ASIS, ALYW…EMVL, and VIAL…FDLF.

Belongs to the UPF0344 family.

Its subcellular location is the cell membrane. The protein is UPF0344 protein GK0697 of Geobacillus kaustophilus (strain HTA426).